The chain runs to 544 residues: D-2-hydroxyglutarate dehydrogenase, mitochondrial (544 aa).

The N-terminal 10 residues, 1–10, are a transit peptide targeting the mitochondrion; the sequence is MMMPRLVPRW. An FAD-binding PCMH-type domain is found at 119-298; that stretch reads VRGSSKVLLR…TAVSILCPPK (180 aa). An N6-succinyllysine modification is found at lysine 124. (R)-2-hydroxyglutarate is bound by residues arginine 409, threonine 413, and lysine 424. Position 409 (arginine 409) interacts with (R)-lactate. 3 residues coordinate (R)-malate: arginine 409, threonine 413, and lysine 424. Histidine 457 and histidine 464 together coordinate Zn(2+). Asparagine 466 contributes to the (R)-2-hydroxyglutarate binding site. Glutamate 498 serves as a coordination point for Zn(2+). A (R)-2-hydroxyglutarate-binding site is contributed by histidine 499. Histidine 499 lines the (R)-lactate pocket. Histidine 499 lines the (R)-malate pocket.

Belongs to the FAD-binding oxidoreductase/transferase type 4 family. FAD serves as cofactor.

It is found in the mitochondrion. The enzyme catalyses (R)-2-hydroxyglutarate + A = 2-oxoglutarate + AH2. It catalyses the reaction (R)-malate + A = oxaloacetate + AH2. Activated by zinc and cobalt ions. Functionally, catalyzes the oxidation of D-2-hydroxyglutarate (D-2-HG) to alpha-ketoglutarate. Also catalyzes the oxidation of other D-2-hydroxyacids, such as D-malate (D-MAL) and D-lactate (D-LAC). Exhibits high activities towards D-2-HG and D-MAL but a very weak activity towards D-LAC. The chain is D-2-hydroxyglutarate dehydrogenase, mitochondrial (D2HGDH) from Bos taurus (Bovine).